We begin with the raw amino-acid sequence, 266 residues long: Ankyrin repeat domain-containing protein 45 (266 aa).

Acidic residues-rich tracts occupy residues 1-11 (MESEGPPESES) and 18-32 (QEEE…EPEE). The disordered stretch occupies residues 1–43 (MESEGPPESESSEFFSQQEEENEEEEAQEPEETGPKNPLLQPA). ANK repeat units follow at residues 76 to 105 (VGRN…NLNE) and 109 to 138 (RGYT…DIEA).

The protein localises to the cytoplasm. The protein resides in the midbody. Its subcellular location is the midbody ring. It is found in the cleavage furrow. In terms of biological role, may play a role during cell division. This Homo sapiens (Human) protein is Ankyrin repeat domain-containing protein 45.